We begin with the raw amino-acid sequence, 447 residues long: Thiol-specific monooxygenase (447 aa).

FAD contacts are provided by residues 13-17, glutamate 38, 46-47, 91-92, and 137-138; these read GAGPS, VW, NT, and DV. An NADP(+)-binding site is contributed by 90–91; that stretch reads TN. 223–226 lines the NADP(+) pocket; sequence SAND.

The protein belongs to the FMO family. In terms of assembly, monomer. FAD is required as a cofactor.

Functionally, flavin-dependent oxidation of thiol-containing compounds. Probably required for the correct folding of disulfide-bonded proteins. This chain is Thiol-specific monooxygenase (fmo1), found in Schizosaccharomyces pombe (strain 972 / ATCC 24843) (Fission yeast).